Reading from the N-terminus, the 358-residue chain is Ribosomal RNA large subunit methyltransferase M (358 aa).

Residues serine 187, 220-223 (CPGG), aspartate 239, aspartate 259, and aspartate 276 each bind S-adenosyl-L-methionine. Catalysis depends on lysine 305, which acts as the Proton acceptor.

This sequence belongs to the class I-like SAM-binding methyltransferase superfamily. RNA methyltransferase RlmE family. RlmM subfamily. In terms of assembly, monomer.

It localises to the cytoplasm. The enzyme catalyses cytidine(2498) in 23S rRNA + S-adenosyl-L-methionine = 2'-O-methylcytidine(2498) in 23S rRNA + S-adenosyl-L-homocysteine + H(+). Functionally, catalyzes the 2'-O-methylation at nucleotide C2498 in 23S rRNA. The sequence is that of Ribosomal RNA large subunit methyltransferase M from Shewanella woodyi (strain ATCC 51908 / MS32).